The sequence spans 673 residues: Bifunctional lycopene cyclase/phytoene synthase (673 aa).

Residues 1–251 (MTALAYYQIH…IVLGLSACDH (251 aa)) form a lycopene beta-cyclase region. Helical transmembrane passes span 9–29 (IHLIYTLPILGLLGLLTSPIL), 36–56 (KISILVFIAFSATTPWDSWII), 81–101 (YEEYAFFVIQTVITGLVYVLA), 117–137 (SALSLALKALIPLPIIYLFTA), 157–177 (LSLLITPPTMLLAALSGEYAF), 187–207 (TIAAIMIPTVYLIWVDYVAVG), and 226–246 (VLPIEEAMFFLLTNLMIVLGL). The segment at 258–673 (LHGRTIYGNK…SVVMSGWEGQ (416 aa)) is phytoene synthase. Positions 376–399 (KILSSPLLPPSHPSRPTGMYPLPP) are disordered.

The protein in the N-terminal section; belongs to the lycopene beta-cyclase family. In the C-terminal section; belongs to the phytoene/squalene synthase family.

The protein resides in the membrane. The enzyme catalyses all-trans-lycopene = gamma-carotene. It carries out the reaction gamma-carotene = all-trans-beta-carotene. It catalyses the reaction 2 (2E,6E,10E)-geranylgeranyl diphosphate = 15-cis-phytoene + 2 diphosphate. Its pathway is carotenoid biosynthesis; beta-carotene biosynthesis. The protein operates within carotenoid biosynthesis; phytoene biosynthesis; all-trans-phytoene from geranylgeranyl diphosphate: step 1/1. Functionally, bifunctional enzyme that catalyzes the reactions from geranylgeranyl diphosphate to phytoene (phytoene synthase) and lycopene to beta-carotene via the intermediate gamma-carotene (lycopene cyclase). The cyclase preferentially catalyzes the symmetric cyclization of both ends of the substrate to produce dicyclic carotenoids. Beta-carotene is further processed to the acidic carotenoid astaxanthin. The protein is Bifunctional lycopene cyclase/phytoene synthase of Phaffia rhodozyma (Yeast).